We begin with the raw amino-acid sequence, 151 residues long: 6,7-dimethyl-8-ribityllumazine synthase (151 aa).

5-amino-6-(D-ribitylamino)uracil is bound by residues Phe-18, 49–51 (ALE), and 74–76 (CVI). 79–80 (ET) is a binding site for (2S)-2-hydroxy-3-oxobutyl phosphate. The active-site Proton donor is the His-82. Residue Asn-107 coordinates 5-amino-6-(D-ribitylamino)uracil. Arg-121 lines the (2S)-2-hydroxy-3-oxobutyl phosphate pocket.

It belongs to the DMRL synthase family.

It carries out the reaction (2S)-2-hydroxy-3-oxobutyl phosphate + 5-amino-6-(D-ribitylamino)uracil = 6,7-dimethyl-8-(1-D-ribityl)lumazine + phosphate + 2 H2O + H(+). Its pathway is cofactor biosynthesis; riboflavin biosynthesis; riboflavin from 2-hydroxy-3-oxobutyl phosphate and 5-amino-6-(D-ribitylamino)uracil: step 1/2. In terms of biological role, catalyzes the formation of 6,7-dimethyl-8-ribityllumazine by condensation of 5-amino-6-(D-ribitylamino)uracil with 3,4-dihydroxy-2-butanone 4-phosphate. This is the penultimate step in the biosynthesis of riboflavin. This Bartonella tribocorum (strain CIP 105476 / IBS 506) protein is 6,7-dimethyl-8-ribityllumazine synthase.